The primary structure comprises 616 residues: Chaperone protein HtpG (616 aa).

Residues 1–333 (MKKQFDTEVN…CQDLPLNVSR (333 aa)) are a; substrate-binding. Residues 334–542 (EILQQNKILS…SNDPTYQMQK (209 aa)) form a b region. The c stretch occupies residues 543 to 616 (IMLSMGQEVK…INEFLEKDLL (74 aa)).

The protein belongs to the heat shock protein 90 family. As to quaternary structure, homodimer.

Its subcellular location is the cytoplasm. Its function is as follows. Molecular chaperone. Has ATPase activity. This Borreliella afzelii (strain PKo) (Borrelia afzelii) protein is Chaperone protein HtpG.